The primary structure comprises 100 residues: uncharacterized protein (100 aa).

The HTH arsR-type domain occupies 1–100; the sequence is MEPIEVFKAL…KLADFLKTEI (100 aa). A DNA-binding region (H-T-H motif) is located at residues 44-67; that stretch reads VSQITDKLKMTQSTASQYLTILLR.

This is an uncharacterized protein from Bacillus subtilis (strain 168).